A 677-amino-acid chain; its full sequence is Methionine--tRNA ligase (677 aa).

The 'HIGH' region signature appears at 15–25 (PYANGSIHLGH). Residues Cys-146, Cys-149, Cys-159, and Cys-162 each contribute to the Zn(2+) site. A 'KMSKS' region motif is present at residues 333–337 (KMSKS). Residue Lys-336 participates in ATP binding. A tRNA-binding domain is found at 575 to 677 (DFAKVDLRVA…AGAKPGHQVK (103 aa)).

It belongs to the class-I aminoacyl-tRNA synthetase family. MetG type 1 subfamily. Homodimer. Zn(2+) serves as cofactor.

It is found in the cytoplasm. The enzyme catalyses tRNA(Met) + L-methionine + ATP = L-methionyl-tRNA(Met) + AMP + diphosphate. Is required not only for elongation of protein synthesis but also for the initiation of all mRNA translation through initiator tRNA(fMet) aminoacylation. This chain is Methionine--tRNA ligase, found in Shigella sonnei (strain Ss046).